The sequence spans 1866 residues: Protein NLRC5 (1866 aa).

Residues 105–135 (GAEGKSQPESQLHHGLKRPHQSCGSSPRRKQ) are disordered. In terms of domain architecture, NACHT spans 222-539 (RVTVLLGKAG…PKVNKDTLTQ (318 aa)). 228-235 (GKAGMGKT) is a binding site for ATP. LRR repeat units follow at residues 599–622 (LKKL…VDET), 713–737 (MGRL…LVKA), 741–765 (CPQL…IVEV), 769–792 (LPRL…CLAR), 869–892 (GPHL…LMAE), 897–921 (LHIA…VLRA), 930–953 (ELHI…EQKG), 976–1000 (SRRM…ALGG), 1004–1026 (LGHL…RLAQ), 1031–1058 (LGAL…CFST), 1138–1161 (LELQ…CLPQ), 1162–1184 (LPQL…FLLA), 1242–1265 (CKDL…CLLE), 1272–1294 (ISGL…LLET), 1462–1488 (CARL…LLQS), 1493–1516 (LSEL…HLAS), 1521–1544 (CHHL…ALMR), 1554–1577 (RLDL…LSQM), 1578–1600 (TCLQ…HLSE), 1605–1628 (ATSL…HLAT), 1633–1656 (LPEL…QLAE), 1661–1684 (CRRL…GLAQ), 1687–1714 (PQHL…ALDG), 1715–1739 (SPHL…CMEL), 1741–1762 (LLRQ…LLTS), and 1795–1818 (MGRL…LLAE).

The protein belongs to the NLRP family. In terms of assembly, interacts with CHUK and IKBKB; prevents CHUK and IKBKB phosphorylation and inhibits their kinase activity. Interacts with RIGI and IFIH1; blocks the interaction of MAVS to RIGI. In terms of tissue distribution, expressed in spleen, thymus, lung, brain, tonsil, heart and prostate.

It is found in the cytoplasm. In terms of biological role, probable regulator of the NF-kappa-B and type I interferon signaling pathways. May also regulate the type II interferon signaling pathway. Plays a role in homeostatic control of innate immunity and in antiviral defense mechanisms. The protein is Protein NLRC5 (NLRC5) of Homo sapiens (Human).